Here is a 48-residue protein sequence, read N- to C-terminus: Cathepsin B (48 aa).

It belongs to the peptidase C1 family. In terms of assembly, dimer of a heavy chain and a light chain cross-linked by a disulfide bond.

It localises to the lysosome. It catalyses the reaction Hydrolysis of proteins with broad specificity for peptide bonds. Preferentially cleaves -Arg-Arg-|-Xaa bonds in small molecule substrates (thus differing from cathepsin L). In addition to being an endopeptidase, shows peptidyl-dipeptidase activity, liberating C-terminal dipeptides.. In terms of biological role, thiol protease which is believed to participate in intracellular degradation and turnover of proteins. Has also been implicated in tumor invasion and metastasis. The protein is Cathepsin B (CTSB) of Coturnix japonica (Japanese quail).